An 881-amino-acid chain; its full sequence is Putative outer membrane usher protein YfcU (881 aa).

The N-terminal stretch at 1 to 29 (MPDHSLFRLRILPWCIALAMSGSYSSVWA) is a signal peptide.

The protein belongs to the fimbrial export usher family.

It is found in the cell outer membrane. Its function is as follows. Part of the yfcOPQRSUV fimbrial operon. Could contribute to adhesion to various surfaces in specific environmental niches. Increases adhesion to eukaryotic T24 bladder epithelial cells in the absence of fim genes. Probably involved in the export and assembly of fimbrial subunits across the outer membrane. The polypeptide is Putative outer membrane usher protein YfcU (yfcU) (Escherichia coli (strain K12)).